We begin with the raw amino-acid sequence, 201 residues long: Ribonuclease HII (201 aa).

The RNase H type-2 domain maps to 12 to 201 (DLVAGVDEVG…VRELLDVPVQ (190 aa)). A divalent metal cation is bound by residues D18, E19, and D110.

Belongs to the RNase HII family. Mn(2+) is required as a cofactor. It depends on Mg(2+) as a cofactor.

The protein localises to the cytoplasm. The catalysed reaction is Endonucleolytic cleavage to 5'-phosphomonoester.. Its function is as follows. Endonuclease that specifically degrades the RNA of RNA-DNA hybrids. In Pseudomonas aeruginosa (strain UCBPP-PA14), this protein is Ribonuclease HII.